The chain runs to 310 residues: MNLRLTVLSGGTGTPKLLRGLRELEADFSVIVNTGEDDEILGLYVSPDVDTVLYTLAGIVNDETWYGIKDDGFRGHEFLERLGVDEPLRIGDADRALKQYRTYLMREKGLKLSEAVDEIRRRLGIKWKVYPMTDDRVTTIVETDEGDLHFREFWVERGGKPPVRGVRYEGAEEASPPPDAVDELLRADVVLIGPSNPVTSIGPILSISEIRHIVREKPVVMVSPFIGREPVSGPAGKLMRAVGFEPSVRGLVEYYREWGVEPDVLIMDERDDVELPEGLEVVRTDTLMRDEKDSVRLAREVLRIVEELVG.

7,8-didemethyl-8-hydroxy-5-deazariboflavin contacts are provided by Asp50 and Arg89.

It belongs to the CofD family. Homodimer. Mg(2+) serves as cofactor.

The enzyme catalyses (2S)-lactyl-2-diphospho-5'-guanosine + 7,8-didemethyl-8-hydroxy-5-deazariboflavin = oxidized coenzyme F420-0 + GMP + H(+). It participates in cofactor biosynthesis; coenzyme F420 biosynthesis. Its function is as follows. Catalyzes the transfer of the 2-phospholactate moiety from (2S)-lactyl-2-diphospho-5'-guanosine to 7,8-didemethyl-8-hydroxy-5-deazariboflavin (FO) with the formation of oxidized coenzyme F420-0 and GMP. In Methanopyrus kandleri (strain AV19 / DSM 6324 / JCM 9639 / NBRC 100938), this protein is 2-phospho-L-lactate transferase.